The chain runs to 71 residues: uncharacterized protein (71 aa).

The span at 1 to 16 (MAKSQAKKKRGHRLRN) shows a compositional bias: basic residues. 2 disordered regions span residues 1 to 39 (MAKSQAKKKRGHRLRNGGRDVLLSRGSTPSFSTHGRMTK) and 51 to 71 (KNPYDHTAVDDKDFFVPQKAA). Over residues 25–35 (RGSTPSFSTHG) the composition is skewed to polar residues. Positions 51–64 (KNPYDHTAVDDKDF) are enriched in basic and acidic residues.

This is an uncharacterized protein from Bacillus subtilis (strain 168).